Here is a 249-residue protein sequence, read N- to C-terminus: EID1-like F-box protein 2 (249 aa).

The 53-residue stretch at H16–A68 folds into the F-box domain.

The protein is EID1-like F-box protein 2 (EDL2) of Arabidopsis thaliana (Mouse-ear cress).